The chain runs to 207 residues: Small ribosomal subunit protein uS4 (207 aa).

A disordered region spans residues Lys31 to Gly53. Positions Cys97–Val157 constitute an S4 RNA-binding domain.

This sequence belongs to the universal ribosomal protein uS4 family. As to quaternary structure, part of the 30S ribosomal subunit. Contacts protein S5. The interaction surface between S4 and S5 is involved in control of translational fidelity.

One of the primary rRNA binding proteins, it binds directly to 16S rRNA where it nucleates assembly of the body of the 30S subunit. Functionally, with S5 and S12 plays an important role in translational accuracy. In Acidovorax ebreus (strain TPSY) (Diaphorobacter sp. (strain TPSY)), this protein is Small ribosomal subunit protein uS4.